The sequence spans 206 residues: Probable GTP-binding protein EngB (206 aa).

An EngB-type G domain is found at 23-195 (DLLEIAFVGR…WARIEAIMAE (173 aa)). Residues 31-38 (GRSNVGKS), 58-62 (GRTQL), 76-79 (DLPG), 143-146 (TKCD), and 174-176 (FSA) each bind GTP. Mg(2+)-binding residues include Ser38 and Thr60.

This sequence belongs to the TRAFAC class TrmE-Era-EngA-EngB-Septin-like GTPase superfamily. EngB GTPase family. It depends on Mg(2+) as a cofactor.

Functionally, necessary for normal cell division and for the maintenance of normal septation. This is Probable GTP-binding protein EngB from Geobacter sulfurreducens (strain ATCC 51573 / DSM 12127 / PCA).